A 227-amino-acid polypeptide reads, in one-letter code: Acyl-protein thioesterase 1 (227 aa).

Residues Ser-119, Asp-173, and His-207 each act as charge relay system in the active site.

The protein belongs to the AB hydrolase superfamily. AB hydrolase 2 family.

Its subcellular location is the cytoplasm. The protein localises to the nucleus. It carries out the reaction S-hexadecanoyl-L-cysteinyl-[protein] + H2O = L-cysteinyl-[protein] + hexadecanoate + H(+). Hydrolyzes fatty acids from S-acylated cysteine residues in proteins with a strong preference for palmitoylated G-alpha proteins over other acyl substrates. Mediates the deacylation of G-alpha proteins such as GPA1 in vivo, but has weak or no activity toward palmitoylated Ras proteins. Has weak lysophospholipase activity in vitro; however such activity may not exist in vivo. The chain is Acyl-protein thioesterase 1 from Saccharomyces cerevisiae (strain ATCC 204508 / S288c) (Baker's yeast).